Reading from the N-terminus, the 535-residue chain is MNISQEVARRRTFAIISHPDAGKTTLTEKLLLFAGAIQIAGSVKARKASRHASSDWMEIEKQRGISVASSVMQMEYRDCVINLLDTPGHQDFSEDTYRVLTAVDAALMVIDAANGVEPQTIRLLQVCRARNTPIITFINKMDREVREPLDLLSEIEGHLGMDAVPFSWPVGMGKSFGGVFDIRRDRMRVFRPGQERRSDDDDIIDGLDNPEIASRFGSAFEQANGEIELIQEAAPAFDREAFLAGRQTPVFFGSAINNFGVQEVLDALVEQAPPPGPRQALERLVEPQEPKFTGVVFKVQANMDPAHRDRVAFVRVSSGRFERGMRLKVARTNKEMRPNNVVSFLSQRRELLDEAYAGDVIGIPNHGVLQLGDVLTEGESLRFTGLPFFAPELFQAVEVKDPLRTKQLRIGLTQLGEEGAIQVFRPEAAGGTLLLGAVGQLQFEVVAHRLKTEYGVEARMLPSRYTMARWITSENPRALRKFMDANAAHIAYDVVDAAAFLIGSPAQLRVAEDLYPDVKFHAMREHGGQVFGSHA.

In terms of domain architecture, tr-type G spans 8–276 (ARRRTFAIIS…ALVEQAPPPG (269 aa)). GTP-binding positions include 17-24 (SHPDAGKT), 85-89 (DTPGH), and 139-142 (NKMD).

This sequence belongs to the TRAFAC class translation factor GTPase superfamily. Classic translation factor GTPase family. PrfC subfamily.

The protein resides in the cytoplasm. Its function is as follows. Increases the formation of ribosomal termination complexes and stimulates activities of RF-1 and RF-2. It binds guanine nucleotides and has strong preference for UGA stop codons. It may interact directly with the ribosome. The stimulation of RF-1 and RF-2 is significantly reduced by GTP and GDP, but not by GMP. The sequence is that of Peptide chain release factor 3 from Bordetella petrii (strain ATCC BAA-461 / DSM 12804 / CCUG 43448).